The primary structure comprises 778 residues: Endonuclease MutS2 (778 aa).

328–335 contributes to the ATP binding site; the sequence is GPNTGGKT. The Smr domain maps to 703–778; it reads LDLRGKRYEE…GSGCTIANLG (76 aa).

This sequence belongs to the DNA mismatch repair MutS family. MutS2 subfamily. As to quaternary structure, homodimer. Binds to stalled ribosomes, contacting rRNA.

In terms of biological role, endonuclease that is involved in the suppression of homologous recombination and thus may have a key role in the control of bacterial genetic diversity. Acts as a ribosome collision sensor, splitting the ribosome into its 2 subunits. Detects stalled/collided 70S ribosomes which it binds and splits by an ATP-hydrolysis driven conformational change. Acts upstream of the ribosome quality control system (RQC), a ribosome-associated complex that mediates the extraction of incompletely synthesized nascent chains from stalled ribosomes and their subsequent degradation. Probably generates substrates for RQC. The protein is Endonuclease MutS2 of Streptococcus equi subsp. zooepidemicus (strain H70).